Here is a 572-residue protein sequence, read N- to C-terminus: Urocanate hydratase (572 aa).

NAD(+)-binding positions include 48 to 49 (GG), Gln-126, 172 to 174 (GMG), Asp-192, 238 to 239 (NA), 259 to 263 (QTSAH), 268 to 269 (YL), and Tyr-317. Cys-405 is an active-site residue. Gly-487 lines the NAD(+) pocket. Positions 550 to 559 (EGDEAHEGDA) are enriched in basic and acidic residues. The disordered stretch occupies residues 550 to 572 (EGDEAHEGDAAHGSGAAREGDGV).

It belongs to the urocanase family. NAD(+) serves as cofactor.

The protein localises to the cytoplasm. The enzyme catalyses 4-imidazolone-5-propanoate = trans-urocanate + H2O. Its pathway is amino-acid degradation; L-histidine degradation into L-glutamate; N-formimidoyl-L-glutamate from L-histidine: step 2/3. Its function is as follows. Catalyzes the conversion of urocanate to 4-imidazolone-5-propionate. This is Urocanate hydratase from Streptomyces coelicolor (strain ATCC BAA-471 / A3(2) / M145).